The chain runs to 289 residues: Shikimate kinase (289 aa).

An ATP-binding site is contributed by 84–94; the sequence is PVASGLSSSSA.

The protein belongs to the GHMP kinase family. Archaeal shikimate kinase subfamily.

It is found in the cytoplasm. The catalysed reaction is shikimate + ATP = 3-phosphoshikimate + ADP + H(+). It functions in the pathway metabolic intermediate biosynthesis; chorismate biosynthesis; chorismate from D-erythrose 4-phosphate and phosphoenolpyruvate: step 5/7. The polypeptide is Shikimate kinase (aroK) (Methanothermobacter thermautotrophicus (strain ATCC 29096 / DSM 1053 / JCM 10044 / NBRC 100330 / Delta H) (Methanobacterium thermoautotrophicum)).